The sequence spans 114 residues: ATP synthase subunit c (114 aa).

Helical transmembrane passes span 31–51 and 88–108; these read AVFY…AAGG and IETF…TGIF.

This sequence belongs to the ATPase C chain family. F-type ATPases have 2 components, F(1) - the catalytic core - and F(0) - the membrane proton channel. F(1) has five subunits: alpha(3), beta(3), gamma(1), delta(1), epsilon(1). F(0) has three main subunits: a(1), b(2) and c(10-14). The alpha and beta chains form an alternating ring which encloses part of the gamma chain. F(1) is attached to F(0) by a central stalk formed by the gamma and epsilon chains, while a peripheral stalk is formed by the delta and b chains.

It is found in the cell inner membrane. F(1)F(0) ATP synthase produces ATP from ADP in the presence of a proton or sodium gradient. F-type ATPases consist of two structural domains, F(1) containing the extramembraneous catalytic core and F(0) containing the membrane proton channel, linked together by a central stalk and a peripheral stalk. During catalysis, ATP synthesis in the catalytic domain of F(1) is coupled via a rotary mechanism of the central stalk subunits to proton translocation. Functionally, key component of the F(0) channel; it plays a direct role in translocation across the membrane. A homomeric c-ring of between 10-14 subunits forms the central stalk rotor element with the F(1) delta and epsilon subunits. The protein is ATP synthase subunit c of Sulfurihydrogenibium sp. (strain YO3AOP1).